The following is a 422-amino-acid chain: Histidine--tRNA ligase (422 aa).

Belongs to the class-II aminoacyl-tRNA synthetase family. Homodimer.

It localises to the cytoplasm. The enzyme catalyses tRNA(His) + L-histidine + ATP = L-histidyl-tRNA(His) + AMP + diphosphate + H(+). The protein is Histidine--tRNA ligase of Vibrio parahaemolyticus serotype O3:K6 (strain RIMD 2210633).